We begin with the raw amino-acid sequence, 362 residues long: Serpentine receptor class epsilon-37 (362 aa).

A run of 7 helical transmembrane segments spans residues 29–49 (IFYVFAIFQTSIYILTGYILV), 67–87 (IMMCWFLCQWFQAFLAKIVLI), 127–147 (IYFASYFLWHYMYSILFAVLA), 170–190 (IPILLIAATNLITLPYAYQTT), 204–224 (IFIGSVAVFGYIMLWRVNLAW), 260–280 (LVVSASVFILVVTILLAVLLF), and 288–308 (FFVHALDNSMLLPALVMSLTL).

Belongs to the nematode receptor-like protein sre family.

It is found in the membrane. In Caenorhabditis elegans, this protein is Serpentine receptor class epsilon-37 (sre-37).